The primary structure comprises 541 residues: Arginine--tRNA ligase (541 aa).

The 'HIGH' region signature appears at Ala-119 to His-129.

It belongs to the class-I aminoacyl-tRNA synthetase family. As to quaternary structure, monomer.

The protein resides in the cytoplasm. It carries out the reaction tRNA(Arg) + L-arginine + ATP = L-arginyl-tRNA(Arg) + AMP + diphosphate. This chain is Arginine--tRNA ligase, found in Helicobacter pylori (strain HPAG1).